We begin with the raw amino-acid sequence, 341 residues long: Glycerol-3-phosphate dehydrogenase [NAD(P)+] (341 aa).

4 residues coordinate NADPH: serine 15, tryptophan 16, arginine 36, and lysine 110. Positions 110, 139, and 141 each coordinate sn-glycerol 3-phosphate. Alanine 143 is an NADPH binding site. Residues lysine 194, aspartate 247, serine 257, arginine 258, and asparagine 259 each coordinate sn-glycerol 3-phosphate. Lysine 194 functions as the Proton acceptor in the catalytic mechanism. Arginine 258 serves as a coordination point for NADPH. The NADPH site is built by valine 282 and glutamate 284.

Belongs to the NAD-dependent glycerol-3-phosphate dehydrogenase family.

It localises to the cytoplasm. It catalyses the reaction sn-glycerol 3-phosphate + NAD(+) = dihydroxyacetone phosphate + NADH + H(+). The enzyme catalyses sn-glycerol 3-phosphate + NADP(+) = dihydroxyacetone phosphate + NADPH + H(+). The protein operates within membrane lipid metabolism; glycerophospholipid metabolism. Its function is as follows. Catalyzes the reduction of the glycolytic intermediate dihydroxyacetone phosphate (DHAP) to sn-glycerol 3-phosphate (G3P), the key precursor for phospholipid synthesis. In Xanthomonas campestris pv. campestris (strain 8004), this protein is Glycerol-3-phosphate dehydrogenase [NAD(P)+].